The following is a 398-amino-acid chain: Metal tolerance protein 1 (398 aa).

Residues 1-56 lie on the Cytoplasmic side of the membrane; the sequence is MESSSPHHSHIVEVNVGKSDEERIIVASKVCGEAPCGFSDSKNASGDAHERSASMR. A helical membrane pass occupies residues 57–77; the sequence is KLCIAVVLCLVFMSVEVVGGI. The Vacuolar segment spans residues 78–89; the sequence is KANSLAILTDAA. The helical transmembrane segment at 90–110 threads the bilayer; that stretch reads HLLSDVAAFAISLFSLWAAGW. At 111-122 the chain is on the cytoplasmic side; that stretch reads EATPRQTYGFFR. The helical transmembrane segment at 123-143 threads the bilayer; it reads IEILGALVSIQLIWLLTGILV. The Vacuolar segment spans residues 144–159; the sequence is YEAIIRIVTETSEVNG. The chain crosses the membrane as a helical span at residues 160–180; that stretch reads FLMFLVAAFGLVVNIIMAVLL. At 181-263 the chain is on the cytoplasmic side; the sequence is GHDHGHSHGH…KRNINLQGAY (83 aa). The tract at residues 182 to 232 is required for zinc-binding; that stretch reads HDHGHSHGHGHGHGHDHHNHSHGVTVTTHHHHHDHEHGHSHGHGEDKHHAH. The segment at 186 to 232 is disordered; the sequence is HSHGHGHGHGHDHHNHSHGVTVTTHHHHHDHEHGHSHGHGEDKHHAH. Positions 187–202 are enriched in basic residues; it reads SHGHGHGHGHDHHNHS. The segment covering 216–232 has biased composition (basic and acidic residues); that stretch reads HEHGHSHGHGEDKHHAH. A helical membrane pass occupies residues 264 to 284; sequence LHVLGDSIQSVGVMIGGAIIW. At 285-290 the chain is on the vacuolar side; the sequence is YNPEWK. Residues 291–311 traverse the membrane as a helical segment; that stretch reads IVDLICTLAFSVIVLGTTINM. Over 312-398 the chain is Cytoplasmic; that stretch reads IRNILEVLME…ISHVTIQIER (87 aa).

The protein belongs to the cation diffusion facilitator (CDF) transporter (TC 2.A.4) family. SLC30A subfamily. Ubiquitously expressed at low levels.

The protein localises to the vacuole membrane. Functionally, mediates zinc accumulation in roots and confers resistance to zinc. Involved in sequestration of excess zinc in the cytoplasm into vacuoles to maintain zinc homeostasis. Can also transport cadmium with a low efficiency. The chain is Metal tolerance protein 1 from Arabidopsis thaliana (Mouse-ear cress).